Here is a 124-residue protein sequence, read N- to C-terminus: Protein ApaG (124 aa).

The ApaG domain maps to 1 to 124 (MSRYELTVQV…FALAMPRMLH (124 aa)).

The polypeptide is Protein ApaG (Ralstonia nicotianae (strain ATCC BAA-1114 / GMI1000) (Ralstonia solanacearum)).